Here is a 242-residue protein sequence, read N- to C-terminus: Biosynthetic peptidoglycan transglycosylase (242 aa).

The chain crosses the membrane as a helical span at residues 19–39 (LMVVLAVFWAGGIALFSVAPV).

Belongs to the glycosyltransferase 51 family.

The protein resides in the cell inner membrane. It catalyses the reaction [GlcNAc-(1-&gt;4)-Mur2Ac(oyl-L-Ala-gamma-D-Glu-L-Lys-D-Ala-D-Ala)](n)-di-trans,octa-cis-undecaprenyl diphosphate + beta-D-GlcNAc-(1-&gt;4)-Mur2Ac(oyl-L-Ala-gamma-D-Glu-L-Lys-D-Ala-D-Ala)-di-trans,octa-cis-undecaprenyl diphosphate = [GlcNAc-(1-&gt;4)-Mur2Ac(oyl-L-Ala-gamma-D-Glu-L-Lys-D-Ala-D-Ala)](n+1)-di-trans,octa-cis-undecaprenyl diphosphate + di-trans,octa-cis-undecaprenyl diphosphate + H(+). The protein operates within cell wall biogenesis; peptidoglycan biosynthesis. Functionally, peptidoglycan polymerase that catalyzes glycan chain elongation from lipid-linked precursors. The sequence is that of Biosynthetic peptidoglycan transglycosylase from Shigella boydii serotype 4 (strain Sb227).